Reading from the N-terminus, the 408-residue chain is Tryptophan synthase beta chain (408 aa).

K90 bears the N6-(pyridoxal phosphate)lysine mark.

The protein belongs to the TrpB family. As to quaternary structure, tetramer of two alpha and two beta chains. The cofactor is pyridoxal 5'-phosphate.

It catalyses the reaction (1S,2R)-1-C-(indol-3-yl)glycerol 3-phosphate + L-serine = D-glyceraldehyde 3-phosphate + L-tryptophan + H2O. The protein operates within amino-acid biosynthesis; L-tryptophan biosynthesis; L-tryptophan from chorismate: step 5/5. The beta subunit is responsible for the synthesis of L-tryptophan from indole and L-serine. In Bacillus licheniformis (strain ATCC 14580 / DSM 13 / JCM 2505 / CCUG 7422 / NBRC 12200 / NCIMB 9375 / NCTC 10341 / NRRL NRS-1264 / Gibson 46), this protein is Tryptophan synthase beta chain.